The primary structure comprises 463 residues: L-seryl-tRNA(Sec) selenium transferase (463 aa).

N6-(pyridoxal phosphate)lysine is present on lysine 295.

This sequence belongs to the SelA family. As to quaternary structure, homodecamer; pentamer of dimers. Binds only one seryl-tRNA(Sec) per dimer. Requires pyridoxal 5'-phosphate as cofactor.

The protein resides in the cytoplasm. It carries out the reaction L-seryl-tRNA(Sec) + selenophosphate + H(+) = L-selenocysteinyl-tRNA(Sec) + phosphate. It participates in aminoacyl-tRNA biosynthesis; selenocysteinyl-tRNA(Sec) biosynthesis; selenocysteinyl-tRNA(Sec) from L-seryl-tRNA(Sec) (bacterial route): step 1/1. Functionally, converts seryl-tRNA(Sec) to selenocysteinyl-tRNA(Sec) required for selenoprotein biosynthesis. In Salmonella dublin (strain CT_02021853), this protein is L-seryl-tRNA(Sec) selenium transferase.